Reading from the N-terminus, the 94-residue chain is Integration host factor subunit beta (94 aa).

Belongs to the bacterial histone-like protein family. In terms of assembly, heterodimer of an alpha and a beta chain.

Its function is as follows. This protein is one of the two subunits of integration host factor, a specific DNA-binding protein that functions in genetic recombination as well as in transcriptional and translational control. The chain is Integration host factor subunit beta from Haemophilus influenzae (strain 86-028NP).